The chain runs to 942 residues: Apolipoprotein B receptor (942 aa).

Disordered regions lie at residues 66 to 212 (GLRS…VTED), 240 to 269 (ERMVPMRDGERARAQGTQCPGAESEDQAML), 283 to 487 (DSLG…SPER), 501 to 607 (AGPE…VPWE), and 671 to 942 (EGRG…PKPQ). 5 stretches are compositionally biased toward basic and acidic residues: residues 106–123 (QAERQDTGSWKAAEDARG), 132–143 (PEAEPGTHRDRS), 240–252 (ERMVPMRDGERAR), 312–330 (EADKGDQQDEVDEKREAEV), and 338–352 (EAERTGEMTEGHIAE). Residues 353-370 (EEAMGEQETEGSFEDEER) are compositionally biased toward acidic residues. Position 364 is a phosphoserine (S364). Over residues 384–397 (EEVRAEESSREKRN) the composition is skewed to basic and acidic residues. Residues 415-425 (PDWEDSPEVST) show a composition bias toward acidic residues. Composition is skewed to basic and acidic residues over residues 444–458 (LRVKVTEGQDPELVR) and 466–475 (QLEEGQKGQE). Phosphoserine occurs at positions 484 and 520. Basic and acidic residues-rich tracts occupy residues 514 to 531 (GVDRRNSQEVKADAEAGK) and 672 to 687 (GRGEAGRGTELEETTE). Over residues 709 to 721 (QEIDGTEEGEQAE) the composition is skewed to acidic residues. Positions 837–853 (SRLDVSVPRSRVLLSRS) are enriched in low complexity. The segment covering 854–863 (SSRRRSRPSF) has biased composition (basic residues).

As to quaternary structure, homodimer. There are 2 forms in macrophages, the membrane-binding proteins 200 kDa (MBP 200) and 235 kDa (MBP 235), that can be reduced into a single active ligand-binding species with intermediate mobility (MBP 200R). As to expression, highly expressed in spleen, lung and skeletal muscle, and weakly in brain, heart, kidney, and testis.

Its subcellular location is the cell membrane. In terms of biological role, macrophage receptor that binds to the apolipoprotein B48 (APOB) of dietary triglyceride (TG)-rich lipoproteins (TRL) or to a like domain of APOB in hypertriglyceridemic very low density lipoprotein (HTG-VLDL). Binds and internalizes TRL when out of the context of the macrophage. May provide essential lipids to reticuloendothelial cells. Could also be involved in foam cell formation with elevated TRL and remnant lipoprotein (RLP). Mediates the rapid high-affinity uptake of chylomicrons (CM), HTG-VLDL, and trypsinized (tryp) VLDL devoid of APOE in vitro in macrophages. The sequence is that of Apolipoprotein B receptor from Mus musculus (Mouse).